The following is a 175-amino-acid chain: Hypoxanthine-guanine phosphoribosyltransferase (175 aa).

K40 and G41 together coordinate diphosphate. Residues E96 and D97 each contribute to the Mg(2+) site. Catalysis depends on D100, which acts as the Proton acceptor. GMP is bound by residues K128, 149–150, and D156; that span reads FL. R162 is a diphosphate binding site.

The protein belongs to the purine/pyrimidine phosphoribosyltransferase family. The cofactor is Mg(2+).

The protein localises to the cytoplasm. The catalysed reaction is IMP + diphosphate = hypoxanthine + 5-phospho-alpha-D-ribose 1-diphosphate. It catalyses the reaction GMP + diphosphate = guanine + 5-phospho-alpha-D-ribose 1-diphosphate. It participates in purine metabolism; IMP biosynthesis via salvage pathway; IMP from hypoxanthine: step 1/1. The protein operates within purine metabolism; GMP biosynthesis via salvage pathway; GMP from guanine: step 1/1. Functionally, purine salvage pathway enzyme that catalyzes the transfer of the ribosyl-5-phosphate group from 5-phospho-alpha-D-ribose 1-diphosphate (PRPP) to the N9 position of the 6-oxopurines hypoxanthine and guanine to form the corresponding ribonucleotides IMP (inosine 5'-monophosphate) and GMP (guanosine 5'-monophosphate), with the release of PPi. The polypeptide is Hypoxanthine-guanine phosphoribosyltransferase (hpt) (Mycoplasma genitalium (strain ATCC 33530 / DSM 19775 / NCTC 10195 / G37) (Mycoplasmoides genitalium)).